The sequence spans 79 residues: Acyl carrier protein (79 aa).

In terms of domain architecture, Carrier spans 2 to 77 (SEIGERVKKI…DATKFLEKNA (76 aa)). O-(pantetheine 4'-phosphoryl)serine is present on Ser-37.

This sequence belongs to the acyl carrier protein (ACP) family. Post-translationally, 4'-phosphopantetheine is transferred from CoA to a specific serine of apo-ACP by AcpS. This modification is essential for activity because fatty acids are bound in thioester linkage to the sulfhydryl of the prosthetic group.

It localises to the cytoplasm. It participates in lipid metabolism; fatty acid biosynthesis. Carrier of the growing fatty acid chain in fatty acid biosynthesis. The sequence is that of Acyl carrier protein from Nitrobacter hamburgensis (strain DSM 10229 / NCIMB 13809 / X14).